A 399-amino-acid chain; its full sequence is Subtilisin-like protease 4 (399 aa).

The N-terminal stretch at 1–19 is a signal peptide; it reads MVCLKTLSVFLAAFAAADA. The propeptide occupies 20–118; it reads RAVFKTQGHK…VEQDQVVRIS (99 aa). The Inhibitor I9 domain occupies 38–117; the sequence is YIVVMKDGVS…YVEQDQVVRI (80 aa). The N-linked (GlcNAc...) asparagine glycan is linked to asparagine 102. In terms of domain architecture, Peptidase S8 spans 128 to 399; it reads SWGLGRVSHR…NRLLYNGSGQ (272 aa). Catalysis depends on charge relay system residues aspartate 160 and histidine 191. Asparagine 252 and asparagine 308 each carry an N-linked (GlcNAc...) asparagine glycan. Serine 346 (charge relay system) is an active-site residue. An N-linked (GlcNAc...) asparagine glycan is attached at asparagine 395.

The protein belongs to the peptidase S8 family.

It localises to the secreted. Functionally, secreted subtilisin-like serine protease with keratinolytic activity that contributes to pathogenicity. This is Subtilisin-like protease 4 (SUB4) from Trichophyton rubrum (Athlete's foot fungus).